Reading from the N-terminus, the 109-residue chain is Small ribosomal subunit protein uS10c (109 aa).

The protein belongs to the universal ribosomal protein uS10 family. Part of the 30S ribosomal subunit.

Its subcellular location is the plastid. The protein resides in the chloroplast. Functionally, involved in the binding of tRNA to the ribosomes. The sequence is that of Small ribosomal subunit protein uS10c from Cyanidium caldarium (Red alga).